A 509-amino-acid polypeptide reads, in one-letter code: MEEIHRYLQPDSSQQHNFLYPLIFQEYIYALAQDHGLNRNRSILLENSGYNNKLSFLIVKRLITRMYQQNHFIISTNDSNKNPFLGCNKSLYSQMISEGFACIVEIPFSIRLISSLSSFEGKKIFKSHNLRSIHSTFPFLEDNFAHLNYVLDILIPYPVHLEILVQTLRYWVKDASSLHLLRFFLHEYCNLNSLITSKKPGYSFSKKNQRFFFFLYNSYVYECESTFVFLRNQSSHLRSTSFGALLERIYFYGKIERLVEVFAKDFQVTLWLFKDPFMHYVRYEGKSILASKGTFPLMNKWKFYLVNFWQCHFSMYFHTGRIHINQLSNHSRDFMGYLSSVRLNHSMVRSQMLENSFLINNPIKKFETLVPIIPLIGSLAKAHFCTVLGHPISKPVWSDLSDSDIIDRFGRICRNLFHYYSGSSKKKTLYRIKYILRLSCARTLARKHKSTVRTFLKRSGSELLEEFLTSEEQVLSLTFPRASSSLWGVYRSRIWYLDIFCINDLANYQ.

This sequence belongs to the intron maturase 2 family. MatK subfamily.

Its subcellular location is the plastid. The protein localises to the chloroplast. Its function is as follows. Usually encoded in the trnK tRNA gene intron. Probably assists in splicing its own and other chloroplast group II introns. The chain is Maturase K from Solanum tuberosum (Potato).